Reading from the N-terminus, the 415-residue chain is Polyketide biosynthesis malonyl-ACP decarboxylase PksF (415 aa).

Residues 6–407 (LPEVVVTGVG…GMNTAVCIQN (402 aa)) enclose the Ketosynthase family 3 (KS3) domain.

It belongs to the thiolase-like superfamily. Beta-ketoacyl-ACP synthases family.

It localises to the cytoplasm. It carries out the reaction malonyl-[ACP] + H(+) = acetyl-[ACP] + CO2. It functions in the pathway antibiotic biosynthesis; bacillaene biosynthesis. In terms of biological role, involved in some intermediate steps for the synthesis of the antibiotic polyketide bacillaene which is involved in secondary metabolism. It decarboxylates selectively the malonyl group attached on the acyl-carrier-protein AcpK (Mal-AcpK). This is Polyketide biosynthesis malonyl-ACP decarboxylase PksF (pksF) from Bacillus subtilis (strain 168).